The sequence spans 266 residues: Methionine aminopeptidase (266 aa).

Histidine 80 contacts substrate. Aspartate 98, aspartate 109, and histidine 172 together coordinate a divalent metal cation. Histidine 179 contributes to the substrate binding site. Glutamate 206 and glutamate 237 together coordinate a divalent metal cation.

Belongs to the peptidase M24A family. Methionine aminopeptidase type 1 subfamily. As to quaternary structure, monomer. Co(2+) serves as cofactor. Zn(2+) is required as a cofactor. Requires Mn(2+) as cofactor. It depends on Fe(2+) as a cofactor.

The catalysed reaction is Release of N-terminal amino acids, preferentially methionine, from peptides and arylamides.. Functionally, removes the N-terminal methionine from nascent proteins. The N-terminal methionine is often cleaved when the second residue in the primary sequence is small and uncharged (Met-Ala-, Cys, Gly, Pro, Ser, Thr, or Val). Requires deformylation of the N(alpha)-formylated initiator methionine before it can be hydrolyzed. The sequence is that of Methionine aminopeptidase from Buchnera aphidicola subsp. Baizongia pistaciae (strain Bp).